Consider the following 437-residue polypeptide: GTPase Der (437 aa).

2 consecutive EngA-type G domains span residues 2 to 167 (ATVL…EKKG) and 180 to 356 (IRVA…NSLF). GTP-binding positions include 8-15 (GKSNVGKS), 55-59 (DTCGI), 118-121 (NKSE), 186-193 (GRPNAGKS), 233-237 (DTAGL), and 299-302 (NKID). The KH-like domain maps to 357-437 (YRVQTSAVNA…PIFLKFKNRH (81 aa)).

This sequence belongs to the TRAFAC class TrmE-Era-EngA-EngB-Septin-like GTPase superfamily. EngA (Der) GTPase family. As to quaternary structure, associates with the 50S ribosomal subunit.

In terms of biological role, GTPase that plays an essential role in the late steps of ribosome biogenesis. The chain is GTPase Der from Thermosipho melanesiensis (strain DSM 12029 / CIP 104789 / BI429).